The sequence spans 173 residues: Large ribosomal subunit protein uL10 (173 aa).

Belongs to the universal ribosomal protein uL10 family. In terms of assembly, part of the ribosomal stalk of the 50S ribosomal subunit. The N-terminus interacts with L11 and the large rRNA to form the base of the stalk. The C-terminus forms an elongated spine to which L12 dimers bind in a sequential fashion forming a multimeric L10(L12)X complex.

Forms part of the ribosomal stalk, playing a central role in the interaction of the ribosome with GTP-bound translation factors. In Bifidobacterium longum (strain DJO10A), this protein is Large ribosomal subunit protein uL10.